We begin with the raw amino-acid sequence, 267 residues long: Geranylgeranylglyceryl phosphate synthase (267 aa).

Residues Asp23 and Ser52 each contribute to the Mg(2+) site. Residues 173-179, 205-206, and 227-228 each bind sn-glycerol 1-phosphate; these read YLEAGSG, GG, and GT.

The protein belongs to the GGGP/HepGP synthase family. Group II subfamily. The cofactor is Mg(2+).

The protein localises to the cytoplasm. The catalysed reaction is sn-glycerol 1-phosphate + (2E,6E,10E)-geranylgeranyl diphosphate = sn-3-O-(geranylgeranyl)glycerol 1-phosphate + diphosphate. It participates in membrane lipid metabolism; glycerophospholipid metabolism. Its function is as follows. Prenyltransferase that catalyzes the transfer of the geranylgeranyl moiety of geranylgeranyl diphosphate (GGPP) to the C3 hydroxyl of sn-glycerol-1-phosphate (G1P). This reaction is the first ether-bond-formation step in the biosynthesis of archaeal membrane lipids. The protein is Geranylgeranylglyceryl phosphate synthase of Caldivirga maquilingensis (strain ATCC 700844 / DSM 13496 / JCM 10307 / IC-167).